A 156-amino-acid polypeptide reads, in one-letter code: Small ribosomal subunit protein uS7 (156 aa).

The protein belongs to the universal ribosomal protein uS7 family. As to quaternary structure, part of the 30S ribosomal subunit. Contacts proteins S9 and S11.

Its function is as follows. One of the primary rRNA binding proteins, it binds directly to 16S rRNA where it nucleates assembly of the head domain of the 30S subunit. Is located at the subunit interface close to the decoding center, probably blocks exit of the E-site tRNA. In Clostridioides difficile (strain 630) (Peptoclostridium difficile), this protein is Small ribosomal subunit protein uS7.